The primary structure comprises 301 residues: Sulfate adenylyltransferase subunit 2 (301 aa).

It belongs to the PAPS reductase family. CysD subfamily. As to quaternary structure, heterodimer composed of CysD, the smaller subunit, and CysN.

It carries out the reaction sulfate + ATP + H(+) = adenosine 5'-phosphosulfate + diphosphate. The protein operates within sulfur metabolism; hydrogen sulfide biosynthesis; sulfite from sulfate: step 1/3. With CysN forms the ATP sulfurylase (ATPS) that catalyzes the adenylation of sulfate producing adenosine 5'-phosphosulfate (APS) and diphosphate, the first enzymatic step in sulfur assimilation pathway. APS synthesis involves the formation of a high-energy phosphoric-sulfuric acid anhydride bond driven by GTP hydrolysis by CysN coupled to ATP hydrolysis by CysD. This Shewanella woodyi (strain ATCC 51908 / MS32) protein is Sulfate adenylyltransferase subunit 2.